The following is a 243-amino-acid chain: MRNDLETLKHIIDSSNRITFFTGAGVSVASGVPDFRSMGGLFDEISKDGLSPEYLLSRDYLEDDPEGFINFCHKRLLFVDTKPNIVHDWIAKLERNQQSLGVITQNIDGLHSDAGSQHVDELHGTLNRFYCNACHKSYTKSDVIDRTLKHCDNCGGAIRPDIVLYGEMLDQPTIIRSLNKIEHADTLVVLGSSLVVQPAAGLISNFKGDNLIIINKDRTPYDRDATLVIHDDMVSVVKSLMTE.

A Deacetylase sirtuin-type domain is found at 1–243; it reads MRNDLETLKH…VSVVKSLMTE (243 aa). 7 residues coordinate NAD(+): Ala-24, Phe-35, Arg-36, Gln-105, Ile-107, Asp-108, and His-123. Residue Phe-35 participates in nicotinamide binding. Nicotinamide contacts are provided by Ile-107 and Asp-108. Residue His-123 is the Proton acceptor of the active site. The Zn(2+) site is built by Cys-131, Cys-134, Cys-151, and Cys-154. Ser-192, Ser-193, Asn-215, and Asp-232 together coordinate NAD(+).

The protein belongs to the sirtuin family. Class U subfamily. It depends on Zn(2+) as a cofactor.

Its subcellular location is the cytoplasm. It carries out the reaction N(6)-acetyl-L-lysyl-[protein] + NAD(+) + H2O = 2''-O-acetyl-ADP-D-ribose + nicotinamide + L-lysyl-[protein]. Its function is as follows. NAD-dependent protein deacetylase which modulates the activities of several enzymes which are inactive in their acetylated form. In Staphylococcus aureus (strain MSSA476), this protein is NAD-dependent protein deacetylase.